A 202-amino-acid polypeptide reads, in one-letter code: Imidazoleglycerol-phosphate dehydratase (202 aa).

Belongs to the imidazoleglycerol-phosphate dehydratase family.

It localises to the cytoplasm. The catalysed reaction is D-erythro-1-(imidazol-4-yl)glycerol 3-phosphate = 3-(imidazol-4-yl)-2-oxopropyl phosphate + H2O. Its pathway is amino-acid biosynthesis; L-histidine biosynthesis; L-histidine from 5-phospho-alpha-D-ribose 1-diphosphate: step 6/9. This Sinorhizobium medicae (strain WSM419) (Ensifer medicae) protein is Imidazoleglycerol-phosphate dehydratase.